We begin with the raw amino-acid sequence, 197 residues long: MDSSIGIKGRNFAIVAADTKISSSILVVKENHEKFQVIKDRIVMAMTGNQGDAFRTMLYVSESALYEEIQNGIELSPSVLAHMIQNKVHESLRRRQLDISSIVAGRGPEKYDLWSVDKYGAISSVPFCASGYAAYFVYGILDREYSEDITIDAALSIMQKCVNLLKERLMINLEGFMVKIVTDDGILTRTLVPEIKG.

Belongs to the peptidase T1B family. The 26S proteasome consists of a 20S proteasome core and two 19S regulatory subunits. The 20S proteasome core is composed of 28 subunits that are arranged in four stacked rings, resulting in a barrel-shaped structure. The two end rings are each formed by seven alpha subunits, and the two central rings are each formed by seven beta subunits. The catalytic chamber with the active sites is on the inside of the barrel.

The protein localises to the cytoplasm. Its subcellular location is the nucleus. Non-catalytic component of the proteasome which degrades poly-ubiquitinated proteins in the cytoplasm and in the nucleus. It is essential for the regulated turnover of proteins and for the removal of misfolded proteins. The proteasome is a multicatalytic proteinase complex that is characterized by its ability to cleave peptides with Arg, Phe, Tyr, Leu, and Glu adjacent to the leaving group at neutral or slightly basic pH. It has an ATP-dependent proteolytic activity. This Encephalitozoon cuniculi (strain GB-M1) (Microsporidian parasite) protein is Probable proteasome subunit beta type-4 (PRE1).